The following is a 193-amino-acid chain: Acyl carrier protein phosphodiesterase (193 aa).

Belongs to the AcpH family.

It carries out the reaction holo-[ACP] + H2O = apo-[ACP] + (R)-4'-phosphopantetheine + H(+). Converts holo-ACP to apo-ACP by hydrolytic cleavage of the phosphopantetheine prosthetic group from ACP. The chain is Acyl carrier protein phosphodiesterase from Yersinia pestis.